The following is a 424-amino-acid chain: Glutamyl-tRNA reductase (424 aa).

Residues 53–56, Ser111, 116–118, and Gln122 each bind substrate; these read TCNR and EPQ. Cys54 (nucleophile) is an active-site residue. An NADP(+)-binding site is contributed by 191-196; that stretch reads GAGEMI.

Belongs to the glutamyl-tRNA reductase family. As to quaternary structure, homodimer.

It carries out the reaction (S)-4-amino-5-oxopentanoate + tRNA(Glu) + NADP(+) = L-glutamyl-tRNA(Glu) + NADPH + H(+). It functions in the pathway porphyrin-containing compound metabolism; protoporphyrin-IX biosynthesis; 5-aminolevulinate from L-glutamyl-tRNA(Glu): step 1/2. Functionally, catalyzes the NADPH-dependent reduction of glutamyl-tRNA(Glu) to glutamate 1-semialdehyde (GSA). The sequence is that of Glutamyl-tRNA reductase from Bordetella bronchiseptica (strain ATCC BAA-588 / NCTC 13252 / RB50) (Alcaligenes bronchisepticus).